We begin with the raw amino-acid sequence, 291 residues long: Beta-lactamase CTX-M-25 (291 aa).

The signal sequence occupies residues 1–30; sequence MMRKSVRRAMLMTTACVSLLLASVPLCAQA. Ser73 (nucleophile; acyl-ester intermediate) is an active-site residue. 4 residues coordinate a beta-lactam: Lys76, Ser133, Glu169, and Ser240.

This sequence belongs to the class-A beta-lactamase family. Monomer.

It is found in the secreted. It carries out the reaction a beta-lactam + H2O = a substituted beta-amino acid. Inhibited by the beta-lactamase-blocking agents clavulanic acid and tazobactam; in the DH10B strain. In terms of biological role, extended-spectrum beta-lactamase (ESBL) which confers resistance to penicillins, as well as first, second and third-generation cephalosporins. Has cefotaxime-hydrolyzing activity. Inactive against cephalosporin antibiotic, cefoxitin, and the carbapenem, imipenem. The polypeptide is Beta-lactamase CTX-M-25 (Escherichia coli).